Consider the following 748-residue polypeptide: Wings apart-like protein homolog 1 (748 aa).

Disordered regions lie at residues 23 to 199 (TLAQ…VYAT) and 614 to 644 (EGGCGDEEEEEEGGDESSDEDGVRKDGRLDR). Low complexity predominate over residues 35–64 (PSVRSSDSPDVPDTPDVPVNQLSSPPLSLP). Polar residues-rich tracts occupy residues 68–79 (SEGNAETLQNLS) and 87–96 (LSQSSTSSLN). Residues 172 to 182 (ISSSSNRYSSR) are compositionally biased toward low complexity. Residues 205–723 (KPLASGYGSR…KRLYDFTKAT (519 aa)) enclose the WAPL domain. Residues 616–633 (GCGDEEEEEEGGDESSDE) are compositionally biased toward acidic residues. Residues 634-644 (DGVRKDGRLDR) are compositionally biased toward basic and acidic residues.

Belongs to the WAPL family.

Its subcellular location is the nucleus. Regulator of meiotic chromosome structure and function, playing a role in sister chromatid cohesion, possibly via antagonizing the coh-3/-4 association with axial elements in nuclei during late prophase, cohesin association with chromatin, DNA double strand break repair and polar body positioning following meiotic divisions during oogenesis. Regulates the morphogenesis and temporal assembly of axial elements to control the organization of meiotic chromosomes in pachytene nuclei and is also involved in meiotic chromosomal remodeling in late pachytene nuclei. Required for the removal of the cohesin component scc-1 from mitotic chromosomes. The sequence is that of Wings apart-like protein homolog 1 from Caenorhabditis elegans.